A 353-amino-acid chain; its full sequence is Phosphoribosylformylglycinamidine cyclo-ligase (353 aa).

Belongs to the AIR synthase family.

It localises to the cytoplasm. It carries out the reaction 2-formamido-N(1)-(5-O-phospho-beta-D-ribosyl)acetamidine + ATP = 5-amino-1-(5-phospho-beta-D-ribosyl)imidazole + ADP + phosphate + H(+). It participates in purine metabolism; IMP biosynthesis via de novo pathway; 5-amino-1-(5-phospho-D-ribosyl)imidazole from N(2)-formyl-N(1)-(5-phospho-D-ribosyl)glycinamide: step 2/2. The sequence is that of Phosphoribosylformylglycinamidine cyclo-ligase from Symbiobacterium thermophilum (strain DSM 24528 / JCM 14929 / IAM 14863 / T).